Consider the following 775-residue polypeptide: 5-methyltetrahydropteroyltriglutamate--homocysteine methyltransferase (775 aa).

5-methyltetrahydropteroyltri-L-glutamate-binding positions include 16-19 and lysine 115; that span reads REMK. L-homocysteine is bound by residues 435 to 437 and glutamate 488; that span reads IGS. Residues 435-437 and glutamate 488 contribute to the L-methionine site; that span reads IGS. 5-methyltetrahydropteroyltri-L-glutamate contacts are provided by residues 519–520 and tryptophan 565; that span reads RC. Aspartate 603 serves as a coordination point for L-homocysteine. Residue aspartate 603 coordinates L-methionine. 5-methyltetrahydropteroyltri-L-glutamate is bound at residue glutamate 609. The Zn(2+) site is built by histidine 645, cysteine 647, and glutamate 669. The active-site Proton donor is the histidine 698. Cysteine 730 contributes to the Zn(2+) binding site.

The protein belongs to the vitamin-B12 independent methionine synthase family. Zn(2+) serves as cofactor.

The enzyme catalyses 5-methyltetrahydropteroyltri-L-glutamate + L-homocysteine = tetrahydropteroyltri-L-glutamate + L-methionine. The protein operates within amino-acid biosynthesis; L-methionine biosynthesis via de novo pathway; L-methionine from L-homocysteine (MetE route): step 1/1. Its function is as follows. Catalyzes the transfer of a methyl group from 5-methyltetrahydrofolate to homocysteine resulting in methionine formation. This chain is 5-methyltetrahydropteroyltriglutamate--homocysteine methyltransferase, found in Coxiella burnetii (strain CbuK_Q154) (Coxiella burnetii (strain Q154)).